The following is a 78-amino-acid chain: High temperature lethal protein 1 (78 aa).

Residue serine 2 is modified to N-acetylserine.

As to quaternary structure, interacts directly with RSC8. Component of the two forms of the RSC complex composed of at least either RSC1 or RSC2, and ARP7, ARP9, LDB7, NPL6, RSC3, RSC30, RSC4, RSC58, RSC6, RSC8, RSC9, SFH1, STH1, HTL1 and probably RTT102. The complexes interact with histone and histone variant components of centromeric chromatin. Component of a fungal-specific module (HTL1-LDB7-NPL6-RSC3-RSC30) within the RSC complex.

It is found in the nucleus. In terms of biological role, required for cell cycle progression through G2/M transition at temperatures higher than 33 degrees Celsius. Component of the chromatin structure-remodeling complex (RSC), which is involved in transcription regulation and nucleosome positioning. RSC is responsible for the transfer of a histone octamer from a nucleosome core particle to naked DNA. The reaction requires ATP and involves an activated RSC-nucleosome intermediate. Remodeling reaction also involves DNA translocation, DNA twist and conformational change. As a reconfigurer of centromeric and flanking nucleosomes, RSC complex is required both for proper kinetochore function in chromosome segregation and, via a PKC1-dependent signaling pathway, for organization of the cellular cytoskeleton. When associated with the RSC complex, may act coordinately with PKC1 to regulate G2/M transition. Together with LDB7, NPL6, RSC3, RSC30 components, defines a fungal-specific module within the RSC complex that plays a role in many cellular functions including the maintenance of cell wall integrity. The chain is High temperature lethal protein 1 (HTL1) from Saccharomyces cerevisiae (strain ATCC 204508 / S288c) (Baker's yeast).